We begin with the raw amino-acid sequence, 333 residues long: T-cell surface glycoprotein CD1b-2 (333 aa).

Residues 1 to 20 form the signal peptide; the sequence is MLLLPLLLLGVILPGGDNED. Residues 21-302 are Extracellular-facing; the sequence is VFQGPTSFHL…LYWGHPTSIG (282 aa). N-linked (GlcNAc...) asparagine glycans are attached at residues Asn38, Asn75, and Asn146. 3 disulfides stabilise this stretch: Cys120–Cys184, Cys149–Cys163, and Cys224–Cys279. The region spanning 185 to 295 is the Ig-like domain; it reads PRYLLGVLDA…LGDQDIILYW (111 aa). The chain crosses the membrane as a helical span at residues 303-323; sequence LILVAIIVPSLILSICLALWF. Residues 324 to 333 lie on the Cytoplasmic side of the membrane; that stretch reads WRRWSYQNIL. The Internalization signal motif lies at 329-332; the sequence is YQNI.

As to quaternary structure, heterodimer with B2M (beta-2-microglobulin). Interacts with saposin C.

The protein localises to the cell membrane. It is found in the endosome membrane. The protein resides in the lysosome membrane. In terms of biological role, antigen-presenting protein that binds self and non-self lipid and glycolipid antigens and presents them to T-cell receptors on natural killer T-cells. The sequence is that of T-cell surface glycoprotein CD1b-2 from Ovis aries (Sheep).